Consider the following 289-residue polypeptide: D-xylonolactone lactonase (289 aa).

Glu-17 is a Fe(2+) binding site. 4 residues coordinate D-xylono-1,5-lactone: Arg-98, Asn-100, Glu-119, and Asn-145. Positions 145 and 195 each coordinate Fe(2+). Asp-195 serves as the catalytic Proton donor/acceptor.

The protein belongs to the SMP-30/CGR1 family. The cofactor is Fe(2+).

It catalyses the reaction D-xylono-1,5-lactone + H2O = D-xylonate + H(+). Involved in the degradation of D-xylose. Catalyzes the hydrolysis of D-xylonolactone to D-xylonate. The protein is D-xylonolactone lactonase of Caulobacter vibrioides (strain ATCC 19089 / CIP 103742 / CB 15) (Caulobacter crescentus).